Reading from the N-terminus, the 379-residue chain is Glucose-1-phosphate adenylyltransferase (379 aa).

Residues G164, 179–180 (EK), and S190 each bind alpha-D-glucose 1-phosphate.

This sequence belongs to the bacterial/plant glucose-1-phosphate adenylyltransferase family. In terms of assembly, homotetramer.

It carries out the reaction alpha-D-glucose 1-phosphate + ATP + H(+) = ADP-alpha-D-glucose + diphosphate. It functions in the pathway glycan biosynthesis; glycogen biosynthesis. Involved in the biosynthesis of ADP-glucose, a building block required for the elongation reactions to produce glycogen. Catalyzes the reaction between ATP and alpha-D-glucose 1-phosphate (G1P) to produce pyrophosphate and ADP-Glc. The protein is Glucose-1-phosphate adenylyltransferase of Streptococcus agalactiae serotype III (strain NEM316).